Reading from the N-terminus, the 330-residue chain is Succinylglutamate desuccinylase (330 aa).

Positions 53, 56, and 147 each coordinate Zn(2+). The active site involves Glu210.

Belongs to the AspA/AstE family. Succinylglutamate desuccinylase subfamily. Zn(2+) is required as a cofactor.

The enzyme catalyses N-succinyl-L-glutamate + H2O = L-glutamate + succinate. It functions in the pathway amino-acid degradation; L-arginine degradation via AST pathway; L-glutamate and succinate from L-arginine: step 5/5. Functionally, transforms N(2)-succinylglutamate into succinate and glutamate. The chain is Succinylglutamate desuccinylase from Yersinia enterocolitica serotype O:8 / biotype 1B (strain NCTC 13174 / 8081).